The sequence spans 262 residues: Pyridoxine 5'-phosphate synthase (262 aa).

Position 6 (Asn-6) interacts with 3-amino-2-oxopropyl phosphate. 8–9 (DH) is a 1-deoxy-D-xylulose 5-phosphate binding site. Arg-17 serves as a coordination point for 3-amino-2-oxopropyl phosphate. The active-site Proton acceptor is the His-43. Residues Arg-45 and His-50 each coordinate 1-deoxy-D-xylulose 5-phosphate. Glu-70 (proton acceptor) is an active-site residue. Thr-102 serves as a coordination point for 1-deoxy-D-xylulose 5-phosphate. The Proton donor role is filled by His-215. 3-amino-2-oxopropyl phosphate-binding positions include Gly-216 and 237–238 (GH).

The protein belongs to the PNP synthase family. As to quaternary structure, homooctamer; tetramer of dimers.

It localises to the cytoplasm. The catalysed reaction is 3-amino-2-oxopropyl phosphate + 1-deoxy-D-xylulose 5-phosphate = pyridoxine 5'-phosphate + phosphate + 2 H2O + H(+). The protein operates within cofactor biosynthesis; pyridoxine 5'-phosphate biosynthesis; pyridoxine 5'-phosphate from D-erythrose 4-phosphate: step 5/5. In terms of biological role, catalyzes the complicated ring closure reaction between the two acyclic compounds 1-deoxy-D-xylulose-5-phosphate (DXP) and 3-amino-2-oxopropyl phosphate (1-amino-acetone-3-phosphate or AAP) to form pyridoxine 5'-phosphate (PNP) and inorganic phosphate. This chain is Pyridoxine 5'-phosphate synthase, found in Helicobacter pylori (strain ATCC 700392 / 26695) (Campylobacter pylori).